A 211-amino-acid polypeptide reads, in one-letter code: MRGKQPKRNKDNASVKRNYRCVGYPDCNMSFNRTEHLARHIRKHTGEKPFQCNICLKFFSRIDNLRQHQSSVHSDVDLMSLRRLQQSANSTANDPNATRMFPQLRPYGIVVQPAPVPYNLPISTPASPQDTISLYAPPYFPHPMPSAPIPLPHQPPPLPIYSYMQPLFLNHTPIQNHNIVELPPDSSDTPASPSKVQSFDQAKDASPNAKK.

A Nuclear localization signal motif is present at residues 6-11; it reads PKRNKD. C2H2-type zinc fingers lie at residues 19–44 and 50–73; these read YRCV…IRKH and FQCN…SSVH. Residues 178 to 211 are disordered; sequence NIVELPPDSSDTPASPSKVQSFDQAKDASPNAKK. Low complexity predominate over residues 183-194; that stretch reads PPDSSDTPASPS.

The protein resides in the nucleus. The polypeptide is Probable transcription repressor protein RGM1 (RGM1) (Saccharomyces cerevisiae (strain ATCC 204508 / S288c) (Baker's yeast)).